The sequence spans 320 residues: Lipoyl synthase (320 aa).

Residues cysteine 67, cysteine 72, cysteine 78, cysteine 93, cysteine 97, cysteine 100, and serine 307 each contribute to the [4Fe-4S] cluster site. The 218-residue stretch at 79–296 folds into the Radical SAM core domain; the sequence is FNHGTATFMI…RDKAQAMGFE (218 aa).

It belongs to the radical SAM superfamily. Lipoyl synthase family. Requires [4Fe-4S] cluster as cofactor.

Its subcellular location is the cytoplasm. It catalyses the reaction [[Fe-S] cluster scaffold protein carrying a second [4Fe-4S](2+) cluster] + N(6)-octanoyl-L-lysyl-[protein] + 2 oxidized [2Fe-2S]-[ferredoxin] + 2 S-adenosyl-L-methionine + 4 H(+) = [[Fe-S] cluster scaffold protein] + N(6)-[(R)-dihydrolipoyl]-L-lysyl-[protein] + 4 Fe(3+) + 2 hydrogen sulfide + 2 5'-deoxyadenosine + 2 L-methionine + 2 reduced [2Fe-2S]-[ferredoxin]. The protein operates within protein modification; protein lipoylation via endogenous pathway; protein N(6)-(lipoyl)lysine from octanoyl-[acyl-carrier-protein]: step 2/2. Functionally, catalyzes the radical-mediated insertion of two sulfur atoms into the C-6 and C-8 positions of the octanoyl moiety bound to the lipoyl domains of lipoate-dependent enzymes, thereby converting the octanoylated domains into lipoylated derivatives. This chain is Lipoyl synthase, found in Pasteurella multocida (strain Pm70).